The primary structure comprises 173 residues: MDLVVGRVAKAHGVTGELTVEVRTDDPQGRFVRGAVLRGRPPRGGAEREYVIESVRTHGDRLLVRFDGVADRDAADALRGTVFLVDSADLPPIEDPDEFYDHQLEGLTVITTSGGEVGKVAEVLHTAAGELLAVRTADDTEVLVPFVSAIVLSVSLDDQLITIDPPDGLLELD.

In terms of domain architecture, PRC barrel spans 96-169 (PDEFYDHQLE…LITIDPPDGL (74 aa)).

It belongs to the RimM family. In terms of assembly, binds ribosomal protein uS19.

It localises to the cytoplasm. An accessory protein needed during the final step in the assembly of 30S ribosomal subunit, possibly for assembly of the head region. Essential for efficient processing of 16S rRNA. May be needed both before and after RbfA during the maturation of 16S rRNA. It has affinity for free ribosomal 30S subunits but not for 70S ribosomes. This is Ribosome maturation factor RimM from Mycolicibacterium gilvum (strain PYR-GCK) (Mycobacterium gilvum (strain PYR-GCK)).